The sequence spans 487 residues: ATP synthase subunit beta (487 aa).

An ATP-binding site is contributed by 171–178 (GGAGVGKT).

The protein belongs to the ATPase alpha/beta chains family. F-type ATPases have 2 components, CF(1) - the catalytic core - and CF(0) - the membrane proton channel. CF(1) has five subunits: alpha(3), beta(3), gamma(1), delta(1), epsilon(1). CF(0) has three main subunits: a(1), b(2) and c(9-12). The alpha and beta chains form an alternating ring which encloses part of the gamma chain. CF(1) is attached to CF(0) by a central stalk formed by the gamma and epsilon chains, while a peripheral stalk is formed by the delta and b chains.

It localises to the cell membrane. The enzyme catalyses ATP + H2O + 4 H(+)(in) = ADP + phosphate + 5 H(+)(out). Functionally, produces ATP from ADP in the presence of a proton gradient across the membrane. The catalytic sites are hosted primarily by the beta subunits. This chain is ATP synthase subunit beta, found in Leifsonia xyli subsp. xyli (strain CTCB07).